The sequence spans 273 residues: Urease accessory protein UreD (273 aa).

It belongs to the UreD family. As to quaternary structure, ureD, UreF and UreG form a complex that acts as a GTP-hydrolysis-dependent molecular chaperone, activating the urease apoprotein by helping to assemble the nickel containing metallocenter of UreC. The UreE protein probably delivers the nickel.

The protein resides in the cytoplasm. Its function is as follows. Required for maturation of urease via the functional incorporation of the urease nickel metallocenter. The protein is Urease accessory protein UreD of Bacillus cereus (strain ATCC 10987 / NRS 248).